The following is a 289-amino-acid chain: Protease HtpX homolog (289 aa).

Helical transmembrane passes span 7-26 and 31-48; these read TAAL…YWVI and GLII…FSWY. His132 provides a ligand contact to Zn(2+). Glu133 is an active-site residue. His136 contributes to the Zn(2+) binding site. Helical transmembrane passes span 151 to 171 and 182 to 202; these read VAGA…FGGG and LGVL…QLAI. Zn(2+) is bound at residue Glu207.

The protein belongs to the peptidase M48B family. It depends on Zn(2+) as a cofactor.

It localises to the cell inner membrane. This is Protease HtpX homolog from Nostoc punctiforme (strain ATCC 29133 / PCC 73102).